Consider the following 194-residue polypeptide: Imidazoleglycerol-phosphate dehydratase (194 aa).

The protein belongs to the imidazoleglycerol-phosphate dehydratase family.

It is found in the cytoplasm. The enzyme catalyses D-erythro-1-(imidazol-4-yl)glycerol 3-phosphate = 3-(imidazol-4-yl)-2-oxopropyl phosphate + H2O. It participates in amino-acid biosynthesis; L-histidine biosynthesis; L-histidine from 5-phospho-alpha-D-ribose 1-diphosphate: step 6/9. The chain is Imidazoleglycerol-phosphate dehydratase from Bacillus cereus (strain AH820).